The following is a 471-amino-acid chain: Adenosylhomocysteinase (471 aa).

3 residues coordinate substrate: threonine 58, aspartate 133, and glutamate 195. 196–198 (TTT) is an NAD(+) binding site. Substrate-binding residues include lysine 225 and aspartate 229. Residues asparagine 230, 259-264 (GFGDVG), glutamate 282, asparagine 317, 338-340 (IGH), and asparagine 383 each bind NAD(+).

Belongs to the adenosylhomocysteinase family. NAD(+) serves as cofactor.

It is found in the cytoplasm. The catalysed reaction is S-adenosyl-L-homocysteine + H2O = L-homocysteine + adenosine. It participates in amino-acid biosynthesis; L-homocysteine biosynthesis; L-homocysteine from S-adenosyl-L-homocysteine: step 1/1. May play a key role in the regulation of the intracellular concentration of adenosylhomocysteine. The protein is Adenosylhomocysteinase of Rhodopseudomonas palustris (strain BisB5).